Consider the following 239-residue polypeptide: Probable transcriptional regulatory protein BT9727_0453 (239 aa).

This sequence belongs to the TACO1 family. YeeN subfamily.

The protein resides in the cytoplasm. The chain is Probable transcriptional regulatory protein BT9727_0453 from Bacillus thuringiensis subsp. konkukian (strain 97-27).